The chain runs to 607 residues: Albumin (607 aa).

A signal peptide spans 1-18; the sequence is MKWVTFVSLLFLFSSAYS. Residues 19-24 constitute a propeptide that is removed on maturation; the sequence is RGVLRR. Albumin domains follow at residues 19 to 209, 210 to 402, and 403 to 600; these read RGVL…DALK, ERIL…QFTP, and LVEE…KLVA. His-27 is a Cu cation binding site. A Phosphoserine modification is found at Ser-29. Residues Glu-30 and Asp-37 each contribute to the Ca(2+) site. Cys-77 and Cys-86 are joined by a disulfide. 2 positions are modified to phosphoserine: Ser-82 and Ser-89. Zn(2+) is bound at residue His-91. 6 cysteine pairs are disulfide-bonded: Cys-99/Cys-115, Cys-114/Cys-125, Cys-147/Cys-192, Cys-191/Cys-200, Cys-223/Cys-269, and Cys-268/Cys-276. Thr-107 is subject to Phosphothreonine. A Ca(2+)-binding site is contributed by Glu-267. The Zn(2+) site is built by His-270 and Asp-272. Ca(2+) contacts are provided by Asp-272, Glu-275, Asp-278, and Asp-282. 8 disulfide bridges follow: Cys-288–Cys-302, Cys-301–Cys-312, Cys-339–Cys-384, Cys-383–Cys-392, Cys-415–Cys-461, Cys-460–Cys-471, Cys-484–Cys-500, and Cys-499–Cys-510. The residue at position 442 (Ser-442) is a Phosphoserine. Residues Thr-443 and Thr-445 each carry the phosphothreonine modification. Position 512 is a phosphoserine (Ser-512). Intrachain disulfides connect Cys-537/Cys-582 and Cys-581/Cys-590. Position 557 is an N6-methyllysine (Lys-557). The residue at position 569 (Thr-569) is a Phosphothreonine. Lys-587 bears the N6-succinyllysine mark.

This sequence belongs to the ALB/AFP/VDB family. As to quaternary structure, interacts with FCGRT; this interaction regulates ALB homeostasis. Interacts with TASOR. In plasma, occurs in a covalently-linked complex with chromophore-bound alpha-1-microglobulin; this interaction does not prevent fatty acid binding to ALB. Post-translationally, phosphorylated by FAM20C in the extracellular medium. In terms of tissue distribution, plasma.

The protein localises to the secreted. In terms of biological role, binds water, Ca(2+), Na(+), K(+), fatty acids, hormones, bilirubin and drugs. Its main function is the regulation of the colloidal osmotic pressure of blood. Major zinc transporter in plasma, typically binds about 80% of all plasma zinc. Major calcium and magnesium transporter in plasma, binds approximately 45% of circulating calcium and magnesium in plasma. Potentially has more than two calcium-binding sites and might additionally bind calcium in a non-specific manner. The shared binding site between zinc and calcium at residue Asp-272 suggests a crosstalk between zinc and calcium transport in the blood. The rank order of affinity is zinc &gt; calcium &gt; magnesium. Binds to the bacterial siderophore enterobactin and inhibits enterobactin-mediated iron uptake of E.coli from ferric transferrin, and may thereby limit the utilization of iron and growth of enteric bacteria such as E.coli. Does not prevent iron uptake by the bacterial siderophore aerobactin. In Equus caballus (Horse), this protein is Albumin (ALB).